Here is a 173-residue protein sequence, read N- to C-terminus: Mitochondrial holo-[acyl-carrier-protein] synthase (173 aa).

It belongs to the P-Pant transferase superfamily. AcpS family.

It localises to the mitochondrion. It carries out the reaction apo-[ACP] + CoA = holo-[ACP] + adenosine 3',5'-bisphosphate + H(+). Functionally, transfers the 4'-phosphopantetheine moiety from coenzyme A to a Ser of mitochondrial acyl-carrier-protein. The polypeptide is Mitochondrial holo-[acyl-carrier-protein] synthase (PPT2) (Saccharomyces cerevisiae (strain ATCC 204508 / S288c) (Baker's yeast)).